We begin with the raw amino-acid sequence, 1284 residues long: Putative late blight resistance protein homolog R1B-16 (1284 aa).

The stretch at 533–555 forms a coiled coil; that stretch reads PRMNEEIVGFKDVIENLRNQLLN. The NB-ARC domain occupies 534-821; sequence RMNEEIVGFK…SESFIKSSEG (288 aa). 567-574 is a binding site for ATP; sequence GMPGLGKT. 8 LRR repeats span residues 942 to 966, 985 to 1010, 1013 to 1036, 1085 to 1107, 1108 to 1135, 1159 to 1181, 1182 to 1206, and 1219 to 1243; these read FKFL…LFYL, LWNL…VWDM, LRHL…SAKL, PIRL…FCIS, APNL…HLKN, FPQL…ADDA, FPNL…FMDI, and ESVV…NFKL. An HMA domain is found at 1217 to 1284; the sequence is CNESVVKSAM…VEKQRKRGML (68 aa).

It belongs to the disease resistance NB-LRR family.

It is found in the cytoplasm. The protein resides in the membrane. Its function is as follows. Confers resistance to late blight (Phytophthora infestans) races carrying the avirulence gene Avr1. Resistance proteins guard the plant against pathogens that contain an appropriate avirulence protein via an indirect interaction with this avirulence protein. That triggers a defense system including the hypersensitive response, which restricts the pathogen growth. The sequence is that of Putative late blight resistance protein homolog R1B-16 (R1B-16) from Solanum demissum (Wild potato).